A 67-amino-acid polypeptide reads, in one-letter code: Small ribosomal subunit protein eS17 (67 aa).

The protein belongs to the eukaryotic ribosomal protein eS17 family.

The sequence is that of Small ribosomal subunit protein eS17 from Pyrococcus horikoshii (strain ATCC 700860 / DSM 12428 / JCM 9974 / NBRC 100139 / OT-3).